Reading from the N-terminus, the 119-residue chain is UPF0292 protein TV1259 (119 aa).

Residues 11–93 (SIPIIVEGRN…YVDLYLWNFI (83 aa)) form the Toprim domain. 3 residues coordinate Mg(2+): Glu17, Asp62, and Asp64.

The protein belongs to the UPF0292 family. Requires Mg(2+) as cofactor.

This chain is UPF0292 protein TV1259, found in Thermoplasma volcanium (strain ATCC 51530 / DSM 4299 / JCM 9571 / NBRC 15438 / GSS1).